Reading from the N-terminus, the 603-residue chain is Pyruvate oxidase (603 aa).

The tract at residues 1 to 191 is core; the sequence is MVMKQTKQTN…WYASANSYQT (191 aa). An FAD-binding region spans residues 192–342; the sequence is PLLPEPDVQA…ILAQVSERES (151 aa). A thiamine pyrophosphate binding region spans residues 343–603; the sequence is TPWWQANLAN…LQHQIGQGGF (261 aa). 3 residues coordinate Mg(2+): D447, N474, and Q476.

It belongs to the TPP enzyme family. As to quaternary structure, homotetramer. It depends on FAD as a cofactor. Mg(2+) serves as cofactor. Requires thiamine diphosphate as cofactor.

It catalyses the reaction pyruvate + phosphate + O2 + H(+) = acetyl phosphate + H2O2 + CO2. Important for the aerobic growth. Decarboxylates pyruvate in four steps. The energy released is partially stored in acetyl phosphate. The chain is Pyruvate oxidase (pox5) from Lactiplantibacillus plantarum (strain ATCC BAA-793 / NCIMB 8826 / WCFS1) (Lactobacillus plantarum).